The chain runs to 367 residues: tRNA/tmRNA (uracil-C(5))-methyltransferase (367 aa).

Residues glutamine 190, tyrosine 218, asparagine 223, glutamate 239, and aspartate 299 each contribute to the S-adenosyl-L-methionine site. Cysteine 324 serves as the catalytic Nucleophile. Glutamate 358 acts as the Proton acceptor in catalysis.

This sequence belongs to the class I-like SAM-binding methyltransferase superfamily. RNA M5U methyltransferase family. TrmA subfamily.

The catalysed reaction is uridine(54) in tRNA + S-adenosyl-L-methionine = 5-methyluridine(54) in tRNA + S-adenosyl-L-homocysteine + H(+). The enzyme catalyses uridine(341) in tmRNA + S-adenosyl-L-methionine = 5-methyluridine(341) in tmRNA + S-adenosyl-L-homocysteine + H(+). In terms of biological role, dual-specificity methyltransferase that catalyzes the formation of 5-methyluridine at position 54 (m5U54) in all tRNAs, and that of position 341 (m5U341) in tmRNA (transfer-mRNA). This Dickeya chrysanthemi (strain Ech1591) (Dickeya zeae (strain Ech1591)) protein is tRNA/tmRNA (uracil-C(5))-methyltransferase.